The following is a 73-amino-acid chain: uncharacterized protein (73 aa).

The segment at 1-32 (MFLSSAVRKDSNGVRHLPSVQRWTPGSPPTRA) is disordered.

This is an uncharacterized protein from Frog virus 3 (isolate Goorha) (FV-3).